The primary structure comprises 253 residues: uncharacterized protein (253 aa).

An N-terminal signal peptide occupies residues 1-15 (MNRVILFHFHFFKNA).

This is an uncharacterized protein from Archaeoglobus fulgidus (strain ATCC 49558 / DSM 4304 / JCM 9628 / NBRC 100126 / VC-16).